A 644-amino-acid polypeptide reads, in one-letter code: Phosphatidylinositol polyphosphate 5-phosphatase type IV (644 aa).

The tract at residues 1-193 (MPSKAENLRP…RLPSLLPPRP (193 aa)) is disordered. A run of 8 repeats spans residues 10-13 (PSEP), 15-18 (PQPP), 28-31 (PGAP), 39-42 (PPDV), 55-58 (PATP), 69-71 (PIA), 72-74 (PRP), and 75-78 (PARP). Residues 10-242 (PSEPAPQPPE…SLGPGRPRSP (233 aa)) are 13 X 4 AA repeats of P-X-X-P. Basic and acidic residues predominate over residues 78 to 90 (PRLERALSLDDKG). The residue at position 99 (Ser-99) is a Phosphoserine. A compositionally biased stretch (polar residues) spans 107–118 (NGTSPSRGSVQS). Residues 121 to 124 (PGAP) form repeat 9. A compositionally biased stretch (low complexity) spans 152-163 (GSPSSGGNPLSG). A run of 4 repeats spans residues 169–172 (PNLP), 183–185 (PRL), 190–193 (PPRP), and 236–239 (PGRP). Residues Ser-241 and Ser-256 each carry the phosphoserine modification. Cys-641 carries the cysteine methyl ester modification. Cys-641 carries S-farnesyl cysteine lipidation. The propeptide at 642–644 (SVS) is removed in mature form.

This sequence belongs to the inositol polyphosphate 5-phosphatase family. Interacts (when prenylated) with PDE6D; this is important for normal location in cilia.

The protein resides in the cytoplasm. Its subcellular location is the cytoskeleton. It is found in the cilium axoneme. It localises to the golgi apparatus. The protein localises to the golgi stack membrane. The protein resides in the cell membrane. Its subcellular location is the cell projection. It is found in the ruffle. It localises to the nucleus. The catalysed reaction is a 1,2-diacyl-sn-glycero-3-phospho-(1D-myo-inositol-4,5-bisphosphate) + H2O = a 1,2-diacyl-sn-glycero-3-phospho-(1D-myo-inositol 4-phosphate) + phosphate. It catalyses the reaction a 1,2-diacyl-sn-glycero-3-phospho-(1D-myo-inositol-3,4,5-trisphosphate) + H2O = a 1,2-diacyl-sn-glycero-3-phospho-(1D-myo-inositol-3,4-bisphosphate) + phosphate. It carries out the reaction a 1,2-diacyl-sn-glycero-3-phospho-(1D-myo-inositol-3,5-bisphosphate) + H2O = a 1,2-diacyl-sn-glycero-3-phospho-(1D-myo-inositol-3-phosphate) + phosphate. Phosphatidylinositol (PtdIns) phosphatase that specifically hydrolyzes the 5-phosphate of phosphatidylinositol-3,4,5-trisphosphate (PtdIns(3,4,5)P3), phosphatidylinositol 4,5-bisphosphate(PtdIns(4,5)P2) and phosphatidylinositol 3,5-bisphosphate (PtdIns(3,5)P2). Specific for lipid substrates, inactive towards water soluble inositol phosphates. Plays an essential role in the primary cilium by controlling ciliary growth and phosphoinositide 3-kinase (PI3K) signaling and stability. The protein is Phosphatidylinositol polyphosphate 5-phosphatase type IV (INPP5E) of Pan troglodytes (Chimpanzee).